We begin with the raw amino-acid sequence, 909 residues long: Valine--tRNA ligase (909 aa).

The 'HIGH' region signature appears at 52–62; sequence PNVTGVLHVGH. Positions 542–546 match the 'KMSKS' region motif; that stretch reads KMSKS. Residue Lys-545 coordinates ATP. The stretch at 843-902 forms a coiled coil; that stretch reads IDIDQLKKRFEKELEKNEQNASKIDSKLKNENFVKNAPPEVIEGEKEKHAEFLRRIEKLK.

It belongs to the class-I aminoacyl-tRNA synthetase family. ValS type 1 subfamily. In terms of assembly, monomer.

It is found in the cytoplasm. It carries out the reaction tRNA(Val) + L-valine + ATP = L-valyl-tRNA(Val) + AMP + diphosphate. In terms of biological role, catalyzes the attachment of valine to tRNA(Val). As ValRS can inadvertently accommodate and process structurally similar amino acids such as threonine, to avoid such errors, it has a 'posttransfer' editing activity that hydrolyzes mischarged Thr-tRNA(Val) in a tRNA-dependent manner. The polypeptide is Valine--tRNA ligase (Treponema denticola (strain ATCC 35405 / DSM 14222 / CIP 103919 / JCM 8153 / KCTC 15104)).